The primary structure comprises 366 residues: GTPase Obg (366 aa).

The region spanning 1–159 (MKFLDEAKVY…KTIWLRLKLI (159 aa)) is the Obg domain. Residues 160 to 327 (ADAGLVGLPN…VLRALRDVIV (168 aa)) form the OBG-type G domain. GTP is bound by residues 166-173 (GLPNAGKS), 191-195 (FTTLH), 212-215 (DIPG), 279-282 (SQID), and 308-310 (SAI). Ser173 and Thr193 together coordinate Mg(2+). A disordered region spans residues 333–366 (DDETISQRPKKHRHKLEDRPQHENGPEESEEGEE). Basic and acidic residues predominate over residues 347–357 (KLEDRPQHENG).

This sequence belongs to the TRAFAC class OBG-HflX-like GTPase superfamily. OBG GTPase family. In terms of assembly, monomer. It depends on Mg(2+) as a cofactor.

Its subcellular location is the cytoplasm. An essential GTPase which binds GTP, GDP and possibly (p)ppGpp with moderate affinity, with high nucleotide exchange rates and a fairly low GTP hydrolysis rate. Plays a role in control of the cell cycle, stress response, ribosome biogenesis and in those bacteria that undergo differentiation, in morphogenesis control. The polypeptide is GTPase Obg (Allorhizobium ampelinum (strain ATCC BAA-846 / DSM 112012 / S4) (Agrobacterium vitis (strain S4))).